The primary structure comprises 803 residues: Carbon monoxide dehydrogenase large chain (803 aa).

A 4-hydroxyarginine modification is found at Arg-384. Cys-385 contacts Cu(+). Glu-757 lines the Mo-molybdopterin cytosine dinucleotide pocket.

Dimer of heterotrimers. Each heterotrimer consists of a large, a medium and a small subunit. It depends on Cu(+) as a cofactor. The cofactor is Mo-molybdopterin cytosine dinucleotide.

It catalyses the reaction CO + a quinone + H2O = a quinol + CO2. Functionally, catalyzes the oxidation of carbon monoxide to carbon dioxide. The sequence is that of Carbon monoxide dehydrogenase large chain (cutL) from Hydrogenophaga pseudoflava (Pseudomonas carboxydoflava).